A 197-amino-acid chain; its full sequence is Ribonuclease HII (197 aa).

The 187-residue stretch at 11–197 (HLIAGVDEVG…FAPVKKILGL (187 aa)) folds into the RNase H type-2 domain. 3 residues coordinate a divalent metal cation: Asp-17, Glu-18, and Asp-109.

Belongs to the RNase HII family. Mn(2+) serves as cofactor. Requires Mg(2+) as cofactor.

It is found in the cytoplasm. The enzyme catalyses Endonucleolytic cleavage to 5'-phosphomonoester.. Endonuclease that specifically degrades the RNA of RNA-DNA hybrids. This chain is Ribonuclease HII, found in Actinobacillus pleuropneumoniae serotype 5b (strain L20).